The primary structure comprises 253 residues: Electron transfer flavoprotein subunit beta, mitochondrial (253 aa).

The protein belongs to the ETF beta-subunit/FixA family. Heterodimer of an alpha and a beta subunit. FAD is required as a cofactor. It depends on AMP as a cofactor.

It localises to the mitochondrion matrix. In terms of biological role, the electron transfer flavoprotein serves as a specific electron acceptor for several dehydrogenases, including five acyl-CoA dehydrogenases, glutaryl-CoA and sarcosine dehydrogenase. It transfers the electrons to the main mitochondrial respiratory chain via ETF-ubiquinone oxidoreductase (ETF dehydrogenase). This chain is Electron transfer flavoprotein subunit beta, mitochondrial (ETFB), found in Oryza sativa subsp. indica (Rice).